The chain runs to 130 residues: Cyclin-dependent kinase 4 inhibitor B (130 aa).

ANK repeat units lie at residues 5-34 (GSDA…DPNA), 38-66 (FGRR…EPNC), 71-100 (TLTR…RLDV), and 104-130 (WGRL…ATGD). A Phosphothreonine modification is found at Thr-12.

It belongs to the CDKN2 cyclin-dependent kinase inhibitor family. As to quaternary structure, heterodimer of CDKN2B with CDK4 or CDK6. As to expression, expression abundant in lung, less abundant in testis, barely detectable in liver, and not detectable in neonatal kidney, adult kidney, brain, heart, or spleen.

Its function is as follows. Interacts strongly with CDK4 and CDK6. Potent inhibitor. Potential effector of TGF-beta induced cell cycle arrest. This is Cyclin-dependent kinase 4 inhibitor B (Cdkn2b) from Rattus norvegicus (Rat).